The sequence spans 416 residues: Polyadenylation and cleavage factor homolog 1 (416 aa).

Residues 1–17 (MASNGSFSAQRNANART) are compositionally biased toward polar residues. Positions 1–80 (MASNGSFSAQ…NNNNVSRVSS (80 aa)) are disordered. Over residues 70-80 (SNNNNVSRVSS) the composition is skewed to low complexity. Residues 199 to 220 (KELTDLLSLLNNEKEKKTLEAS) are a coiled coil. The C2H2-type zinc-finger motif lies at 254 to 276 (RQCSSCGLRFKCQEEHSKHMDWH).

In terms of assembly, forms a complex with cleavage and polyadenylation specificity factor (CPSF) subunits CLPS3, CLPS5, CPSF30, PCFS4, PCFS5, CSTF77 and FIPS3.

Its subcellular location is the nucleus. In Arabidopsis thaliana (Mouse-ear cress), this protein is Polyadenylation and cleavage factor homolog 1.